Here is a 104-residue protein sequence, read N- to C-terminus: T-complex protein 1 subunit zeta (104 aa).

Residue Gly-24 participates in ADP binding. Gly-24 serves as a coordination point for ATP. Asp-75 provides a ligand contact to Mg(2+). Residues Gly-76, Thr-78, and Ser-79 each contribute to the ADP site. 2 residues coordinate ATP: Gly-76 and Thr-78.

The protein belongs to the TCP-1 chaperonin family. As to quaternary structure, component of the chaperonin-containing T-complex (TRiC), a hexadecamer composed of two identical back-to-back stacked rings enclosing a protein folding chamber. Each ring is made up of eight different subunits: TCP1/CCT1, CCT2, CCT3, CCT4, CCT5, CCT6A/CCT6, CCT7, CCT8. Interacts with PACRG.

It is found in the cytoplasm. The enzyme catalyses ATP + H2O = ADP + phosphate + H(+). Its function is as follows. Component of the chaperonin-containing T-complex (TRiC), a molecular chaperone complex that assists the folding of actin, tubulin and other proteins upon ATP hydrolysis. The TRiC complex mediates the folding of WRAP53/TCAB1, thereby regulating telomere maintenance. The protein is T-complex protein 1 subunit zeta (CCT6) of Sus scrofa (Pig).